Consider the following 349-residue polypeptide: Phenylalanine--tRNA ligase alpha subunit (349 aa).

A Mg(2+)-binding site is contributed by E259.

It belongs to the class-II aminoacyl-tRNA synthetase family. Phe-tRNA synthetase alpha subunit type 1 subfamily. In terms of assembly, tetramer of two alpha and two beta subunits. Requires Mg(2+) as cofactor.

It localises to the cytoplasm. It catalyses the reaction tRNA(Phe) + L-phenylalanine + ATP = L-phenylalanyl-tRNA(Phe) + AMP + diphosphate + H(+). This Lactobacillus gasseri (strain ATCC 33323 / DSM 20243 / BCRC 14619 / CIP 102991 / JCM 1131 / KCTC 3163 / NCIMB 11718 / NCTC 13722 / AM63) protein is Phenylalanine--tRNA ligase alpha subunit.